Reading from the N-terminus, the 82-residue chain is Penaeidin-3e (82 aa).

The N-terminal stretch at 1 to 19 (MRLVVCLVFLAPFALVCHG) is a signal peptide. Glutamine 20 carries the post-translational modification Pyrrolidone carboxylic acid. Intrachain disulfides connect cysteine 51–cysteine 66, cysteine 55–cysteine 73, and cysteine 67–cysteine 74. At serine 81 the chain carries Serine amide.

This sequence belongs to the penaeidin family.

Its subcellular location is the cytoplasmic granule. In terms of biological role, antibacterial and antifungal activity. Presents chitin-binding activity. The protein is Penaeidin-3e of Penaeus vannamei (Whiteleg shrimp).